Consider the following 229-residue polypeptide: Secreted RxLR effector protein PITG_22926 (229 aa).

The signal sequence occupies residues 1–23 (MRCNHTLCVVAITFLVSWSQTLS). Residues 34–45 (PLVRSVSATEER) carry the RxLR-dEER motif.

Belongs to the RxLR effector family.

It is found in the secreted. It localises to the host nucleus. Its function is as follows. Secreted effector that acts as a RNA silencing suppressor, probably by inhibiting the biogenesis of small RNAs in the host plant, to manipulate host immune responses and promote Phytophthora infection. In Phytophthora infestans (strain T30-4) (Potato late blight agent), this protein is Secreted RxLR effector protein PITG_22926.